Reading from the N-terminus, the 353-residue chain is Photosystem II D2 protein (353 aa).

Thr2 is subject to N-acetylthreonine. At Thr2 the chain carries Phosphothreonine. A helical transmembrane segment spans residues 41–61; the sequence is CAYFALGGWFTGTTFVTSWYT. His118 serves as a coordination point for chlorophyll a. A helical membrane pass occupies residues 125–141; the sequence is GFMLRQFELARSVQLRP. Pheophytin a contacts are provided by Gln130 and Asn143. The helical transmembrane segment at 153 to 166 threads the bilayer; sequence VFVSVFLIYPLGQS. A chlorophyll a-binding site is contributed by His198. The chain crosses the membrane as a helical span at residues 208-228; sequence AALLCAIHGATVENTLFEDGD. A plastoquinone contacts are provided by His215 and Phe262. His215 contacts Fe cation. Position 269 (His269) interacts with Fe cation. A helical transmembrane segment spans residues 279 to 295; sequence GLWMSALGVVGLALNLR.

This sequence belongs to the reaction center PufL/M/PsbA/D family. As to quaternary structure, PSII is composed of 1 copy each of membrane proteins PsbA, PsbB, PsbC, PsbD, PsbE, PsbF, PsbH, PsbI, PsbJ, PsbK, PsbL, PsbM, PsbT, PsbX, PsbY, PsbZ, Psb30/Ycf12, at least 3 peripheral proteins of the oxygen-evolving complex and a large number of cofactors. It forms dimeric complexes. It depends on The D1/D2 heterodimer binds P680, chlorophylls that are the primary electron donor of PSII, and subsequent electron acceptors. It shares a non-heme iron and each subunit binds pheophytin, quinone, additional chlorophylls, carotenoids and lipids. There is also a Cl(-1) ion associated with D1 and D2, which is required for oxygen evolution. The PSII complex binds additional chlorophylls, carotenoids and specific lipids. as a cofactor.

The protein resides in the plastid. It localises to the chloroplast thylakoid membrane. The enzyme catalyses 2 a plastoquinone + 4 hnu + 2 H2O = 2 a plastoquinol + O2. Functionally, photosystem II (PSII) is a light-driven water:plastoquinone oxidoreductase that uses light energy to abstract electrons from H(2)O, generating O(2) and a proton gradient subsequently used for ATP formation. It consists of a core antenna complex that captures photons, and an electron transfer chain that converts photonic excitation into a charge separation. The D1/D2 (PsbA/PsbD) reaction center heterodimer binds P680, the primary electron donor of PSII as well as several subsequent electron acceptors. D2 is needed for assembly of a stable PSII complex. The sequence is that of Photosystem II D2 protein from Aethionema grandiflorum (Persian stone-cress).